We begin with the raw amino-acid sequence, 431 residues long: tRNA(Ile)-lysidine synthase (431 aa).

25–30 contacts ATP; sequence SGGPDS.

This sequence belongs to the tRNA(Ile)-lysidine synthase family.

The protein localises to the cytoplasm. It catalyses the reaction cytidine(34) in tRNA(Ile2) + L-lysine + ATP = lysidine(34) in tRNA(Ile2) + AMP + diphosphate + H(+). Functionally, ligates lysine onto the cytidine present at position 34 of the AUA codon-specific tRNA(Ile) that contains the anticodon CAU, in an ATP-dependent manner. Cytidine is converted to lysidine, thus changing the amino acid specificity of the tRNA from methionine to isoleucine. This chain is tRNA(Ile)-lysidine synthase, found in Lactobacillus gasseri (strain ATCC 33323 / DSM 20243 / BCRC 14619 / CIP 102991 / JCM 1131 / KCTC 3163 / NCIMB 11718 / NCTC 13722 / AM63).